A 189-amino-acid chain; its full sequence is Cancer/testis antigen family 45 member A2 (189 aa).

It belongs to the CT45 family. As to expression, testis specific. Expressed in cancer cell lines.

The polypeptide is Cancer/testis antigen family 45 member A2 (Homo sapiens (Human)).